Here is a 1065-residue protein sequence, read N- to C-terminus: DNA-directed RNA polymerase subunit beta (1065 aa).

This sequence belongs to the RNA polymerase beta chain family. As to quaternary structure, in plastids the minimal PEP RNA polymerase catalytic core is composed of four subunits: alpha, beta, beta', and beta''. When a (nuclear-encoded) sigma factor is associated with the core the holoenzyme is formed, which can initiate transcription.

The protein resides in the plastid. It localises to the chloroplast. The enzyme catalyses RNA(n) + a ribonucleoside 5'-triphosphate = RNA(n+1) + diphosphate. Its function is as follows. DNA-dependent RNA polymerase catalyzes the transcription of DNA into RNA using the four ribonucleoside triphosphates as substrates. This is DNA-directed RNA polymerase subunit beta from Marchantia polymorpha (Common liverwort).